A 623-amino-acid chain; its full sequence is MLFNLNDEARIIGISGMIGSGKTILAKELARDEEVRGHFANRVLFLTVSQSPNLEELRSLIRDFLTGHEAGFGTALPESVGHTRKLVILDDVRTRESLDQLMFNIPGTTTLVVSQSKLVDPRTTYDVELLNEHDATSLFCLSAFNQKSVPSGFSKSLVKQVVGESKGLPLSLKVLGASLNDRPETYWAIAVERLSRGEPVDETHESKVFAQIEATLENLDPKTKECFLDMGAFPEGKKIPVDVLINMLVKIHDLEDAAAFDVLVDLANRNLLTLVKDPTFVAMGTSYYDIFVTQHDVLRDVALHLTNRGKVSRRDRLLMPKRETMLPSEWERSNDEPYNARVVSIHTGEMTEMDWFDMDFPKAEVLIVNFSSDNYVLPPFIAKMGMLRVFVIINNGTSPAHLHDFPIPTSLTNLRSLWLERVHVPELSSSMIPLKNLHKLYLIICKINNSFDQTAIDIAQIFPKLTDITIDYCDDLAELPSTICGITSLNSISITNCPNIKELPKNISKLQALQLLRLYACPELKSLPVEICELPRLVYVDISHCLSLSSLPEKIGNVRTLEKIDMRECSLSSIPSSAVSLTSLCYVTCYREALWMWKEVEKAVPGLRIEATEKWFNMTWPDE.

NB-ARC domains are found at residues 2–51 (LFNL…VSQS) and 119–249 (VDPR…NMLV). 16–23 (GMIGSGKT) contributes to the ATP binding site. LRR repeat units lie at residues 488–511 (SLNS…SKLQ), 512–534 (ALQL…ICEL), 536–558 (RLVY…IGNV), and 560–581 (TLEK…AVSL).

The protein belongs to the disease resistance NB-LRR family.

Potential disease resistance protein. This Arabidopsis thaliana (Mouse-ear cress) protein is Putative disease resistance protein At5g47280.